Here is a 141-residue protein sequence, read N- to C-terminus: Hemoglobin subunit alpha-1 (141 aa).

The region spanning 1–141 (VLTEDDKNHI…VAKTLVAHYR (141 aa)) is the Globin domain. O2 is bound at residue histidine 58. Position 87 (histidine 87) interacts with heme b.

Belongs to the globin family. Heterotetramer of two alpha chains and two beta chains. Red blood cells.

In terms of biological role, involved in oxygen transport from the lung to the various peripheral tissues. This chain is Hemoglobin subunit alpha-1, found in Iguana iguana (Common iguana).